The sequence spans 483 residues: Isocitrate dehydrogenase [NADP] (483 aa).

Residue Thr74 participates in NADP(+) binding. Positions 83, 85, 89, 99, and 121 each coordinate D-threo-isocitrate. Asp232 is a Mg(2+) binding site. NADP(+) contacts are provided by residues 264-270 (HGSAPDI) and Asn277.

Belongs to the isocitrate and isopropylmalate dehydrogenases family. As to quaternary structure, homodimer. Mg(2+) is required as a cofactor. Requires Mn(2+) as cofactor.

The catalysed reaction is D-threo-isocitrate + NADP(+) = 2-oxoglutarate + CO2 + NADPH. Catalyzes the oxidative decarboxylation of isocitrate to 2-oxoglutarate and carbon dioxide with the concomitant reduction of NADP(+). In Rickettsia felis (strain ATCC VR-1525 / URRWXCal2) (Rickettsia azadi), this protein is Isocitrate dehydrogenase [NADP] (icd).